Here is a 294-residue protein sequence, read N- to C-terminus: ATP phosphoribosyltransferase (294 aa).

The protein belongs to the ATP phosphoribosyltransferase family. Long subfamily. Mg(2+) serves as cofactor.

The protein localises to the cytoplasm. It catalyses the reaction 1-(5-phospho-beta-D-ribosyl)-ATP + diphosphate = 5-phospho-alpha-D-ribose 1-diphosphate + ATP. Its pathway is amino-acid biosynthesis; L-histidine biosynthesis; L-histidine from 5-phospho-alpha-D-ribose 1-diphosphate: step 1/9. Its activity is regulated as follows. Feedback inhibited by histidine. Functionally, catalyzes the condensation of ATP and 5-phosphoribose 1-diphosphate to form N'-(5'-phosphoribosyl)-ATP (PR-ATP). Has a crucial role in the pathway because the rate of histidine biosynthesis seems to be controlled primarily by regulation of HisG enzymatic activity. In Pelodictyon phaeoclathratiforme (strain DSM 5477 / BU-1), this protein is ATP phosphoribosyltransferase.